A 150-amino-acid polypeptide reads, in one-letter code: Meiotically up-regulated gene 108 protein (150 aa).

The segment covering 1-11 (MANRFTSSDQT) has biased composition (polar residues). The segment at 1 to 150 (MANRFTSSDQ…RDISLLGSTI (150 aa)) is disordered. Residues 12-23 (QETHGHHVDKHS) are compositionally biased toward basic and acidic residues. Positions 83-93 (NRSSQHTGRVN) are enriched in polar residues.

The protein resides in the cytoplasm. Its subcellular location is the nucleus. Functionally, has a role in meiosis. The protein is Meiotically up-regulated gene 108 protein (mug108) of Schizosaccharomyces pombe (strain 972 / ATCC 24843) (Fission yeast).